A 343-amino-acid polypeptide reads, in one-letter code: S-adenosylmethionine:tRNA ribosyltransferase-isomerase (343 aa).

This sequence belongs to the QueA family. In terms of assembly, monomer.

Its subcellular location is the cytoplasm. The enzyme catalyses 7-aminomethyl-7-carbaguanosine(34) in tRNA + S-adenosyl-L-methionine = epoxyqueuosine(34) in tRNA + adenine + L-methionine + 2 H(+). Its pathway is tRNA modification; tRNA-queuosine biosynthesis. In terms of biological role, transfers and isomerizes the ribose moiety from AdoMet to the 7-aminomethyl group of 7-deazaguanine (preQ1-tRNA) to give epoxyqueuosine (oQ-tRNA). In Pseudoalteromonas translucida (strain TAC 125), this protein is S-adenosylmethionine:tRNA ribosyltransferase-isomerase.